Here is a 465-residue protein sequence, read N- to C-terminus: Ribulose bisphosphate carboxylase large chain (465 aa).

K4 bears the N6,N6,N6-trimethyllysine mark. N113 and T163 together coordinate substrate. The active-site Proton acceptor is the K165. K167 contacts substrate. The Mg(2+) site is built by K191, D193, and E194. An N6-carboxylysine modification is found at K191. H284 acts as the Proton acceptor in catalysis. 3 residues coordinate substrate: R285, H317, and S369.

It belongs to the RuBisCO large chain family. Type I subfamily. In terms of assembly, heterohexadecamer of 8 large chains and 8 small chains; disulfide-linked. The disulfide link is formed within the large subunit homodimers. The cofactor is Mg(2+). In terms of processing, the disulfide bond which can form in the large chain dimeric partners within the hexadecamer appears to be associated with oxidative stress and protein turnover.

It localises to the plastid. Its subcellular location is the chloroplast. It catalyses the reaction 2 (2R)-3-phosphoglycerate + 2 H(+) = D-ribulose 1,5-bisphosphate + CO2 + H2O. It carries out the reaction D-ribulose 1,5-bisphosphate + O2 = 2-phosphoglycolate + (2R)-3-phosphoglycerate + 2 H(+). Functionally, ruBisCO catalyzes two reactions: the carboxylation of D-ribulose 1,5-bisphosphate, the primary event in carbon dioxide fixation, as well as the oxidative fragmentation of the pentose substrate in the photorespiration process. Both reactions occur simultaneously and in competition at the same active site. The protein is Ribulose bisphosphate carboxylase large chain of Passiflora quadrangularis (Grenadine).